The sequence spans 417 residues: Odorant receptor Or1 (417 aa).

The Cytoplasmic portion of the chain corresponds to 1–2; it reads MK. A helical membrane pass occupies residues 3-23; that stretch reads LNKLNPRWDAYDRRDSFWLQL. Residues 24-45 lie on the Extracellular side of the membrane; the sequence is LCLKYLGLWPPEDTDQATRNRY. Residues 46–66 form a helical membrane-spanning segment; that stretch reads IAYGWALRIMFLHLYALTQAL. Over 67–73 the chain is Cytoplasmic; it reads YFKDVKD. The helical transmembrane segment at 74 to 94 threads the bilayer; the sequence is INDIANALFVLMTQVTLIYKL. Residues 95-133 are Extracellular-facing; sequence EKFNYNIARIQACLRKLNCTLYHPKQREEFSPVLQSMSG. N112 carries an N-linked (GlcNAc...) asparagine glycan. Residues 134-154 traverse the membrane as a helical segment; the sequence is VFWLMIFLMFVAIFTIIMWVM. Residues 155–178 lie on the Cytoplasmic side of the membrane; sequence SPAFDNERRLPVPAWFPVDYHHSD. A helical membrane pass occupies residues 179 to 199; sequence IVYGVLFLYQTIGIVMSATYN. Residues 200-284 are Extracellular-facing; the sequence is FSTDTMFSGL…ILSFGDEVQD (85 aa). The helical transmembrane segment at 285 to 305 threads the bilayer; sequence IFQGSIFAQVCASVIIICMTL. Topologically, residues 306 to 317 are cytoplasmic; that stretch reads LQATGDDVTMAD. Residues 318–338 form a helical membrane-spanning segment; it reads LLGCGFYLLVMTSQVFIFCYV. Residues 339–417 lie on the Extracellular side of the membrane; it reads GNEISYTTDK…LAVLQSMESE (79 aa).

This sequence belongs to the insect chemoreceptor superfamily. Heteromeric odorant receptor channel (TC 1.A.69) family. Or2a subfamily. In terms of tissue distribution, female-specific antennae and maxillary palp expression.

The protein resides in the cell membrane. Odorant receptor which plays a critical role in the anthropophilic host-seeking behavior; establishes the host preference to transmit malaria. May participate in the phenomenon of decreased host-seeking behavior in disease vector mosquitoes after blood feeding. The sequence is that of Odorant receptor Or1 (OR1) from Anopheles gambiae (African malaria mosquito).